A 350-amino-acid polypeptide reads, in one-letter code: GTPase Obg (350 aa).

The 159-residue stretch at 1–159 (MKFIDEAKIT…WELALELKVL (159 aa)) folds into the Obg domain. A disordered region spans residues 17 to 43 (GDGSASFRREKYIPKGGPDGGDGGRGG). Positions 33–43 (GPDGGDGGRGG) are enriched in gly residues. Positions 160–334 (ADVGLLGMPN…LTYAVMDYLG (175 aa)) constitute an OBG-type G domain. GTP is bound by residues 166–173 (GMPNAGKS), 191–195 (FTTLA), 213–216 (DIPG), 284–287 (NKLD), and 315–317 (SAL). S173 and T193 together coordinate Mg(2+).

The protein belongs to the TRAFAC class OBG-HflX-like GTPase superfamily. OBG GTPase family. In terms of assembly, monomer. It depends on Mg(2+) as a cofactor.

The protein localises to the cytoplasm. Its function is as follows. An essential GTPase which binds GTP, GDP and possibly (p)ppGpp with moderate affinity, with high nucleotide exchange rates and a fairly low GTP hydrolysis rate. Plays a role in control of the cell cycle, stress response, ribosome biogenesis and in those bacteria that undergo differentiation, in morphogenesis control. In Thiobacillus denitrificans (strain ATCC 25259 / T1), this protein is GTPase Obg.